A 908-amino-acid polypeptide reads, in one-letter code: Protein translocase subunit SecA (908 aa).

ATP contacts are provided by residues Gln-87, 105–109 (GEGKT), and Asp-513. A compositionally biased stretch (low complexity) spans 852 to 863 (ARRAQAQHATAE). A disordered region spans residues 852–908 (ARRAQAQHATAENQLADDEAEAASPQTVVRDERKVGRNEPCPCGSGKKYKQCHGKID). Cys-892, Cys-894, Cys-903, and His-904 together coordinate Zn(2+). Residues 898–908 (KKYKQCHGKID) show a composition bias toward basic residues.

The protein belongs to the SecA family. As to quaternary structure, monomer and homodimer. Part of the essential Sec protein translocation apparatus which comprises SecA, SecYEG and auxiliary proteins SecDF-YajC and YidC. It depends on Zn(2+) as a cofactor.

It is found in the cell inner membrane. The protein localises to the cytoplasm. The catalysed reaction is ATP + H2O + cellular proteinSide 1 = ADP + phosphate + cellular proteinSide 2.. Functionally, part of the Sec protein translocase complex. Interacts with the SecYEG preprotein conducting channel. Has a central role in coupling the hydrolysis of ATP to the transfer of proteins into and across the cell membrane, serving both as a receptor for the preprotein-SecB complex and as an ATP-driven molecular motor driving the stepwise translocation of polypeptide chains across the membrane. This is Protein translocase subunit SecA from Vibrio atlanticus (strain LGP32) (Vibrio splendidus (strain Mel32)).